Reading from the N-terminus, the 209-residue chain is Octanoyltransferase (209 aa).

The 180-residue stretch at Gly30–Lys209 folds into the BPL/LPL catalytic domain. Substrate-binding positions include Arg69 to His76, Ala143 to Gly145, and Gly156 to Ala158. Catalysis depends on Cys174, which acts as the Acyl-thioester intermediate.

The protein belongs to the LipB family.

Its subcellular location is the cytoplasm. It catalyses the reaction octanoyl-[ACP] + L-lysyl-[protein] = N(6)-octanoyl-L-lysyl-[protein] + holo-[ACP] + H(+). It functions in the pathway protein modification; protein lipoylation via endogenous pathway; protein N(6)-(lipoyl)lysine from octanoyl-[acyl-carrier-protein]: step 1/2. Its function is as follows. Catalyzes the transfer of endogenously produced octanoic acid from octanoyl-acyl-carrier-protein onto the lipoyl domains of lipoate-dependent enzymes. Lipoyl-ACP can also act as a substrate although octanoyl-ACP is likely to be the physiological substrate. This chain is Octanoyltransferase, found in Rickettsia bellii (strain OSU 85-389).